A 274-amino-acid polypeptide reads, in one-letter code: Protein CURLY FLAG LEAF 1 (274 aa).

The interval 17–44 (SLNGGGGGGGGRRRGRRAAAAEGSDDSE) is disordered. An EAR motif is present at residues 47–52 (TVELNS). A WW domain is found at 54-88 (VALPYHWEQCLDIRTGQVYYINWEDGTRTTIDPRS). 2 disordered regions span residues 83-133 (TIDP…SGYT) and 175-216 (GRDG…SPTD). 3 stretches are compositionally biased toward low complexity: residues 87 to 106 (RSSS…SSSR), 121 to 133 (AAAA…SGYT), and 184 to 207 (SSSS…AVSS).

In terms of assembly, binds to HDG1.

In terms of biological role, negatively regulates the cuticle development probably by interacting with the HD-ZIP IV transcription factor HDG1. The protein is Protein CURLY FLAG LEAF 1 of Oryza sativa subsp. japonica (Rice).